The primary structure comprises 198 residues: uncharacterized protein (198 aa).

It localises to the cytoplasm. This is an uncharacterized protein from Saccharomyces cerevisiae (strain ATCC 204508 / S288c) (Baker's yeast).